The following is a 1438-amino-acid chain: DNA polymerase III PolC-type (1438 aa).

Positions 422-578 constitute an Exonuclease domain; it reads YVVFDVETTG…YDTEATAYIF (157 aa).

The protein belongs to the DNA polymerase type-C family. PolC subfamily.

The protein localises to the cytoplasm. It carries out the reaction DNA(n) + a 2'-deoxyribonucleoside 5'-triphosphate = DNA(n+1) + diphosphate. Functionally, required for replicative DNA synthesis. This DNA polymerase also exhibits 3' to 5' exonuclease activity. This Staphylococcus aureus (strain bovine RF122 / ET3-1) protein is DNA polymerase III PolC-type.